A 431-amino-acid chain; its full sequence is D-tagatose-1,6-bisphosphate aldolase subunit KbaZ (431 aa).

This sequence belongs to the GatZ/KbaZ family. KbaZ subfamily. As to quaternary structure, forms a complex with KbaY.

The protein operates within carbohydrate metabolism; D-tagatose 6-phosphate degradation; D-glyceraldehyde 3-phosphate and glycerone phosphate from D-tagatose 6-phosphate: step 2/2. Its function is as follows. Component of the tagatose-1,6-bisphosphate aldolase KbaYZ that is required for full activity and stability of the Y subunit. Could have a chaperone-like function for the proper and stable folding of KbaY. When expressed alone, KbaZ does not show any aldolase activity. The protein is D-tagatose-1,6-bisphosphate aldolase subunit KbaZ of Salmonella arizonae (strain ATCC BAA-731 / CDC346-86 / RSK2980).